The following is a 303-amino-acid chain: Glutathione transport system permease protein GsiD (303 aa).

Transmembrane regions (helical) follow at residues 40-60 (AMTA…ARWI), 105-125 (LAAG…LGLL), 144-164 (LFAF…GSGI), 165-185 (ANVI…LVRG), 222-242 (IVVF…SLSF), and 266-286 (VIAP…VLAF). The ABC transmembrane type-1 domain occupies 101-290 (AQISLAAGVF…LTVLAFNLLG (190 aa)).

It belongs to the binding-protein-dependent transport system permease family. In terms of assembly, the complex is composed of two ATP-binding proteins (GsiA), two transmembrane proteins (GsiC and GsiD) and a solute-binding protein (GsiB).

Its subcellular location is the cell inner membrane. Its function is as follows. Part of the ABC transporter complex GsiABCD involved in glutathione import. Probably responsible for the translocation of the substrate across the membrane. This Escherichia coli O157:H7 protein is Glutathione transport system permease protein GsiD.